Reading from the N-terminus, the 197-residue chain is MLERIKDSFTESIQTKIDAAEALPESIAKAAEMMVHCLLGGNKILACGNGGSAGDAQHFSAELLNRYEIERPPLPAIALSTDTSTITAIANDYSYDEIFSKQILALGQPGDILLAISTSGNSGNVIKAMEAALSRDMTIVALTGKDGGAMAGLLSVGDVEIRVPSNVTARIQEVHLLVIHCLCDNIDRTLFPQDEQQ.

The region spanning 34–196 (MVHCLLGGNK…DRTLFPQDEQ (163 aa)) is the SIS domain. 49-51 (NGG) contributes to the substrate binding site. Positions 58 and 62 each coordinate Zn(2+). Residues Glu-62, 91–92 (ND), 117–119 (STS), Ser-122, and Gln-172 each bind substrate. Gln-172 and His-180 together coordinate Zn(2+).

Belongs to the SIS family. GmhA subfamily. As to quaternary structure, homotetramer. It depends on Zn(2+) as a cofactor.

Its subcellular location is the cytoplasm. It catalyses the reaction 2 D-sedoheptulose 7-phosphate = D-glycero-alpha-D-manno-heptose 7-phosphate + D-glycero-beta-D-manno-heptose 7-phosphate. It functions in the pathway carbohydrate biosynthesis; D-glycero-D-manno-heptose 7-phosphate biosynthesis; D-glycero-alpha-D-manno-heptose 7-phosphate and D-glycero-beta-D-manno-heptose 7-phosphate from sedoheptulose 7-phosphate: step 1/1. Catalyzes the isomerization of sedoheptulose 7-phosphate in D-glycero-D-manno-heptose 7-phosphate. The chain is Phosphoheptose isomerase from Shewanella sp. (strain W3-18-1).